The chain runs to 413 residues: MATAMVLDPKPAEKLPATRPETSITDVPSDGEDDLYARLKSLQRQLEFIEIQEEYVKDELKNLRREHLRAQEEVKRIQSVPLVIGQFMEMIDQNNAIVGSTTGSNYYVRILSTINRELLKPSASVGLDRHSNALVDVLPPEADSSISLLSQSEKPDVTYNDIGGCDIQKQEIREAVELPLTHHELYKQIGIDPPRGVLLYGPPGTGKTMLAKAVAHHTTAAFIRVVGSEFVQKYLGEGPRMVRDVFRLAKENAPAIIFIDEVDAIATARFDAQTGADREVQRILMELLNQMDGFDQTVNVKVIMATNRADTLDPALLRPGRLDRKIEFPLPDRRQKRLVFQVCTAKMNLGDEVDLEDYVSRPDKISAAEITAICQEAGMHAVRKNRYVILPKDFEKGYRTNVKKPDTDFEFYK.

The segment at 1 to 30 is disordered; it reads MATAMVLDPKPAEKLPATRPETSITDVPSD. Positions 32–80 form a coiled coil; sequence EDDLYARLKSLQRQLEFIEIQEEYVKDELKNLRREHLRAQEEVKRIQSV. 201–208 contributes to the ATP binding site; sequence GPPGTGKT.

It belongs to the AAA ATPase family.

It localises to the cytoplasm. Its subcellular location is the nucleus. The 26S proteasome is involved in the ATP-dependent degradation of ubiquitinated proteins. The regulatory (or ATPase) complex confers ATP dependency and substrate specificity to the 26S complex. This Solanum tuberosum (Potato) protein is 26S proteasome regulatory subunit 6B homolog.